A 74-amino-acid polypeptide reads, in one-letter code: ATP synthase subunit c (74 aa).

2 helical membrane passes run 5-25 (LAHI…IGVG) and 49-69 (LFIG…VALL).

Belongs to the ATPase C chain family. As to quaternary structure, F-type ATPases have 2 components, F(1) - the catalytic core - and F(0) - the membrane proton channel. F(1) has five subunits: alpha(3), beta(3), gamma(1), delta(1), epsilon(1). F(0) has four main subunits: a(1), b(1), b'(1) and c(10-14). The alpha and beta chains form an alternating ring which encloses part of the gamma chain. F(1) is attached to F(0) by a central stalk formed by the gamma and epsilon chains, while a peripheral stalk is formed by the delta, b and b' chains.

The protein resides in the cell inner membrane. In terms of biological role, f(1)F(0) ATP synthase produces ATP from ADP in the presence of a proton or sodium gradient. F-type ATPases consist of two structural domains, F(1) containing the extramembraneous catalytic core and F(0) containing the membrane proton channel, linked together by a central stalk and a peripheral stalk. During catalysis, ATP synthesis in the catalytic domain of F(1) is coupled via a rotary mechanism of the central stalk subunits to proton translocation. Its function is as follows. Key component of the F(0) channel; it plays a direct role in translocation across the membrane. A homomeric c-ring of between 10-14 subunits forms the central stalk rotor element with the F(1) delta and epsilon subunits. This Roseobacter denitrificans (strain ATCC 33942 / OCh 114) (Erythrobacter sp. (strain OCh 114)) protein is ATP synthase subunit c.